Consider the following 140-residue polypeptide: MAKKVKAIVKLQIPAGKANPAPPIGPALGQHGINIMGFCKEYNERTASMVGTIVPAEITIYDDRSFTFITKTPPAADLLKKAAGVTSGSGTPSKSVVAVISKGQLREIASVKMKDLNAVNIEGAERIIEGTARSMGIKVE.

Belongs to the universal ribosomal protein uL11 family. Part of the ribosomal stalk of the 50S ribosomal subunit. Interacts with L10 and the large rRNA to form the base of the stalk. L10 forms an elongated spine to which L12 dimers bind in a sequential fashion forming a multimeric L10(L12)X complex. In terms of processing, one or more lysine residues are methylated.

In terms of biological role, forms part of the ribosomal stalk which helps the ribosome interact with GTP-bound translation factors. This Dehalococcoides mccartyi (strain CBDB1) protein is Large ribosomal subunit protein uL11.